The following is a 227-amino-acid chain: Ribonuclease 3 (227 aa).

Positions 4-126 (LDRLERKIGY…IIGAMSLDQG (123 aa)) constitute an RNase III domain. Glu39 is a Mg(2+) binding site. Residue Asp43 is part of the active site. Residues Asp112 and Glu115 each contribute to the Mg(2+) site. Glu115 is a catalytic residue. One can recognise a DRBM domain in the interval 153 to 226 (DAKTRLQEYL…AEQILKELDI (74 aa)).

This sequence belongs to the ribonuclease III family. In terms of assembly, homodimer. Mg(2+) serves as cofactor.

It is found in the cytoplasm. The catalysed reaction is Endonucleolytic cleavage to 5'-phosphomonoester.. Functionally, digests double-stranded RNA. Involved in the processing of primary rRNA transcript to yield the immediate precursors to the large and small rRNAs (23S and 16S). Processes some mRNAs, and tRNAs when they are encoded in the rRNA operon. Processes pre-crRNA and tracrRNA of type II CRISPR loci if present in the organism. In Haemophilus influenzae (strain PittGG), this protein is Ribonuclease 3.